A 359-amino-acid polypeptide reads, in one-letter code: Peptide chain release factor 1 (359 aa).

Position 236 is an N5-methylglutamine (Q236).

It belongs to the prokaryotic/mitochondrial release factor family. Post-translationally, methylated by PrmC. Methylation increases the termination efficiency of RF1.

The protein resides in the cytoplasm. Its function is as follows. Peptide chain release factor 1 directs the termination of translation in response to the peptide chain termination codons UAG and UAA. This chain is Peptide chain release factor 1 (prfA), found in Mycoplasma pneumoniae (strain ATCC 29342 / M129 / Subtype 1) (Mycoplasmoides pneumoniae).